Here is a 309-residue protein sequence, read N- to C-terminus: Porphobilinogen deaminase (309 aa).

Cys-241 is modified (S-(dipyrrolylmethanemethyl)cysteine).

It belongs to the HMBS family. As to quaternary structure, monomer. The cofactor is dipyrromethane.

It catalyses the reaction 4 porphobilinogen + H2O = hydroxymethylbilane + 4 NH4(+). Its pathway is porphyrin-containing compound metabolism; protoporphyrin-IX biosynthesis; coproporphyrinogen-III from 5-aminolevulinate: step 2/4. Tetrapolymerization of the monopyrrole PBG into the hydroxymethylbilane pre-uroporphyrinogen in several discrete steps. The chain is Porphobilinogen deaminase from Bacillus thuringiensis subsp. konkukian (strain 97-27).